The primary structure comprises 230 residues: uncharacterized protein (230 aa).

The disordered stretch occupies residues 1–57; the sequence is MPGPHSPNPGVGTNGPAPYPEPSSHEPQALDYPHDLGAAEPAFAPGPADDAALPPAA. Low complexity predominate over residues 38 to 55; the sequence is AAEPAFAPGPADDAALPP. A helical transmembrane segment spans residues 75–95; it reads LLIGIVVALALVSAMTAAIIY.

The protein localises to the membrane. This is an uncharacterized protein from Mycobacterium tuberculosis (strain CDC 1551 / Oshkosh).